A 912-amino-acid polypeptide reads, in one-letter code: Protein translocase subunit SecA (912 aa).

ATP is bound by residues Q87, 105–109, and D508; that span reads GEGKT. The tract at residues 869 to 912 is disordered; the sequence is EQMQGGNAPVPVSQVTRDEPKVGRNDPCPCGSGKKYKHCHGQLS. 4 residues coordinate Zn(2+): C896, C898, C907, and H908. The span at 902-912 shows a compositional bias: basic residues; that stretch reads KKYKHCHGQLS.

Belongs to the SecA family. As to quaternary structure, monomer and homodimer. Part of the essential Sec protein translocation apparatus which comprises SecA, SecYEG and auxiliary proteins SecDF-YajC and YidC. Zn(2+) is required as a cofactor.

The protein localises to the cell inner membrane. It localises to the cytoplasm. The catalysed reaction is ATP + H2O + cellular proteinSide 1 = ADP + phosphate + cellular proteinSide 2.. Part of the Sec protein translocase complex. Interacts with the SecYEG preprotein conducting channel. Has a central role in coupling the hydrolysis of ATP to the transfer of proteins into and across the cell membrane, serving both as a receptor for the preprotein-SecB complex and as an ATP-driven molecular motor driving the stepwise translocation of polypeptide chains across the membrane. This Xanthomonas axonopodis pv. citri (strain 306) protein is Protein translocase subunit SecA.